We begin with the raw amino-acid sequence, 505 residues long: Lysine--tRNA ligase (505 aa).

The Mg(2+) site is built by glutamate 415 and glutamate 422.

Belongs to the class-II aminoacyl-tRNA synthetase family. Homodimer. Requires Mg(2+) as cofactor.

The protein localises to the cytoplasm. It carries out the reaction tRNA(Lys) + L-lysine + ATP = L-lysyl-tRNA(Lys) + AMP + diphosphate. This Salmonella paratyphi C (strain RKS4594) protein is Lysine--tRNA ligase.